Reading from the N-terminus, the 293-residue chain is ATP synthase gamma chain (293 aa).

Belongs to the ATPase gamma chain family. As to quaternary structure, F-type ATPases have 2 components, CF(1) - the catalytic core - and CF(0) - the membrane proton channel. CF(1) has five subunits: alpha(3), beta(3), gamma(1), delta(1), epsilon(1). CF(0) has three main subunits: a, b and c.

Its subcellular location is the cell inner membrane. In terms of biological role, produces ATP from ADP in the presence of a proton gradient across the membrane. The gamma chain is believed to be important in regulating ATPase activity and the flow of protons through the CF(0) complex. The polypeptide is ATP synthase gamma chain (Psychrobacter sp. (strain PRwf-1)).